The primary structure comprises 195 residues: Protein GrpE (195 aa).

It belongs to the GrpE family. As to quaternary structure, homodimer.

It is found in the cytoplasm. Its function is as follows. Participates actively in the response to hyperosmotic and heat shock by preventing the aggregation of stress-denatured proteins, in association with DnaK and GrpE. It is the nucleotide exchange factor for DnaK and may function as a thermosensor. Unfolded proteins bind initially to DnaJ; upon interaction with the DnaJ-bound protein, DnaK hydrolyzes its bound ATP, resulting in the formation of a stable complex. GrpE releases ADP from DnaK; ATP binding to DnaK triggers the release of the substrate protein, thus completing the reaction cycle. Several rounds of ATP-dependent interactions between DnaJ, DnaK and GrpE are required for fully efficient folding. The protein is Protein GrpE of Francisella tularensis subsp. mediasiatica (strain FSC147).